The following is a 162-amino-acid chain: Putative pre-16S rRNA nuclease (162 aa).

Belongs to the YqgF nuclease family.

The protein resides in the cytoplasm. Could be a nuclease involved in processing of the 5'-end of pre-16S rRNA. This Brucella melitensis biotype 1 (strain ATCC 23456 / CCUG 17765 / NCTC 10094 / 16M) protein is Putative pre-16S rRNA nuclease.